We begin with the raw amino-acid sequence, 263 residues long: Mediator of RNA polymerase II transcription subunit 6 (263 aa).

The segment at 159 to 205 (NSIHGSSSKPSQSSAVSKPSSTNTGTNATTTPITLTTPSGATVPSTV) is disordered. Residues 164-200 (SSSKPSQSSAVSKPSSTNTGTNATTTPITLTTPSGAT) are compositionally biased toward low complexity.

It belongs to the Mediator complex subunit 6 family. As to quaternary structure, component of the Mediator complex.

Its subcellular location is the nucleus. In terms of biological role, component of the Mediator complex, a coactivator involved in the regulated transcription of nearly all RNA polymerase II-dependent genes. Mediator functions as a bridge to convey information from gene-specific regulatory proteins to the basal RNA polymerase II transcription machinery. Mediator is recruited to promoters by direct interactions with regulatory proteins and serves as a scaffold for the assembly of a functional preinitiation complex with RNA polymerase II and the general transcription factors. In Candida albicans (strain SC5314 / ATCC MYA-2876) (Yeast), this protein is Mediator of RNA polymerase II transcription subunit 6 (MED6).